The primary structure comprises 175 residues: uncharacterized protein (175 aa).

A signal peptide spans 1–22; it reads MNRIVGILISILMLACIGVTMA.

This is an uncharacterized protein from Archaeoglobus fulgidus (strain ATCC 49558 / DSM 4304 / JCM 9628 / NBRC 100126 / VC-16).